Consider the following 655-residue polypeptide: Endoplasmic reticulum chaperone BiP (655 aa).

The first 19 residues, 1 to 19 (MMKFTVVAAALLLLGAVRA), serve as a signal peptide directing secretion. Residues 1-81 (MMKFTVVAAA…EGERLIGDAA (81 aa)) form a required for interaction with ELAPOR1 region. ATP is bound at residue 37–40 (GTTY). The residue at position 87 (Ser-87) is a Phosphoserine. ATP is bound at residue Lys-97. Lys-126 is subject to N6-acetyllysine. Residues 126 to 281 (KPYIQVDIGG…KKKTGKDVRK (156 aa)) are nucleotide-binding (NBD). At Tyr-161 the chain carries 3'-nitrotyrosine. At Lys-214 the chain carries N6-acetyllysine. An ATP-binding site is contributed by 228–230 (GGT). The residue at position 272 (Lys-272) is an N6-acetyllysine. Residue 294–301 (EKAKRALS) participates in ATP binding. N6-acetyllysine is present on Lys-327. Residue Lys-353 forms a Glycyl lysine isopeptide (Lys-Gly) (interchain with G-Cter in SUMO2) linkage. Lys-354 is subject to N6-acetyllysine; alternate. Lys-354 participates in a covalent cross-link: Glycyl lysine isopeptide (Lys-Gly) (interchain with G-Cter in SUMO1); alternate. 365–368 (GSTR) contributes to the ATP binding site. Residues 410 to 420 (QDTGDLVLLDV) are interdomain linker. The segment at 421–501 (CPLTLGIETV…PRGVPQIEVT (81 aa)) is substrate-binding (SBD). At Lys-448 the chain carries N6-succinyllysine. Arg-493 carries the post-translational modification Omega-N-methylarginine. At Thr-519 the chain carries O-AMP-threonine; alternate. Thr-519 carries the post-translational modification Phosphothreonine; alternate. Lys-586 carries the post-translational modification N6,N6,N6-trimethyllysine; by METTL21A; in vitro. The residue at position 586 (Lys-586) is an N6,N6-dimethyllysine; alternate. Residue Lys-586 is modified to N6-methyllysine; alternate. Lys-592 is modified (N6-methyllysine). The interval 632–655 (ISKLYGSGGPPPTGEEDTSEKDEL) is disordered. Phosphothreonine occurs at positions 644 and 649. A compositionally biased stretch (acidic residues) spans 645–655 (GEEDTSEKDEL). Ser-650 bears the Phosphoserine mark. A Prevents secretion from ER motif is present at residues 652 to 655 (KDEL).

It belongs to the heat shock protein 70 family. In terms of assembly, monomer and homooligomer; homooligomerization via the interdomain linker inactivates the chaperone activity and acts as a storage of HSPA5/BiP molecules. Interacts with DNAJC1 (via J domain). Component of an EIF2 complex at least composed of CELF1/CUGBP1, CALR, CALR3, EIF2S1, EIF2S2, HSP90B1 and HSPA5. Part of a large chaperone multiprotein complex comprising DNAJB11, HSP90B1, HSPA5, HYOU, PDIA2, PDIA4, PDIA6, PPIB, SDF2L1, UGGT1 and very small amounts of ERP29, but not, or at very low levels, CALR nor CANX. Interacts with TMEM132A and TRIM21. May form a complex with ERLEC1, OS9, SEL1L and SYVN1. Interacts with DNAJC10. Interacts with DNAJB9/ERdj4; leading to recruit HSPA5/BiP to ERN1/IRE1. Interacts with ERN1/IRE1 (via luminal domain); the interaction takes place following interaction with DNAJB9/ERdj4 and leads to inactivate ERN1/IRE1, the interaction also competitively inhibits ERN1 interaction with MANF. Interacts directly with MANF (via SAP domain); the interaction inhibits ATP binding to HSPA5/BiP and subsequent nucleotide exchange. Interacts with ERN1 (via luminal domain); the interaction competitively inhibits ERN1 interaction with MANF. Interacts with EIF2AK3/PERK (via luminal domain); interaction leads to inactivate EIF2AK3/PERK. Interacts with MX1. Interacts with METTL23. Interacts with CEMIP; the interaction induces calcium leakage from the endoplasmic reticulum and cell migration. Interacts with PCSK4 form; the interaction takes place in the endoplasmic reticulum. Interacts with CIPC. Interacts with CCDC88B (via C-terminus); the interaction opposes ERN1-mediated JNK activation, protecting against apoptosis. Interacts with INPP5K; necessary for INPP5K localization at the endoplasmic reticulum. Interacts with MANF; the interaction is direct. Interacts with LOXL2; leading to activate the ERN1/IRE1-XBP1 pathway of the unfolded protein response. Interacts with CLU under stressed condition; interaction increases CLU protein stability; facilitates its retrotranslocation and redistribution to the mitochondria; cooperatively suppress stress-induced apoptosis by stabilizing mitochondrial membrane integrity. Interacts with CCDC47. Interacts with CLN3. Interacts with ELAPOR1; may regulate the function of HSPA5 in apoptosis and cell proliferation. Interacts with CASP7. Interacts with ILDR2; the interaction stabilizes ILDR2 expression. Interacts with ADAM7. Post-translationally, in unstressed cells, AMPylation at Thr-519 by FICD inactivates the chaperome activity: AMPylated form is locked in a relatively inert state and only weakly stimulated by J domain-containing proteins. In response to endoplasmic reticulum stress, de-AMPylation by the same protein, FICD, restores the chaperone activity. Expressed in sperm (at protein level).

It localises to the endoplasmic reticulum lumen. The protein resides in the melanosome. It is found in the cytoplasm. The protein localises to the cell surface. The enzyme catalyses ATP + H2O = ADP + phosphate + H(+). With respect to regulation, the chaperone activity is regulated by ATP-induced allosteric coupling of the nucleotide-binding (NBD) and substrate-binding (SBD) domains. In the ADP-bound and nucleotide-free (apo) states, the two domains have little interaction. In contrast, in the ATP-bound state the two domains are tightly coupled, which results in drastically accelerated kinetics in both binding and release of polypeptide substrates. J domain-containing co-chaperones (DNAJB9/ERdj4 or DNAJC10/ERdj5) stimulate the ATPase activity and are required for efficient substrate recognition by HSPA5/BiP. Homooligomerization inactivates participating HSPA5/BiP protomers and probably act as reservoirs to store HSPA5/BiP molecules when they are not needed by the cell. In terms of biological role, endoplasmic reticulum chaperone that plays a key role in protein folding and quality control in the endoplasmic reticulum lumen. Involved in the correct folding of proteins and degradation of misfolded proteins via its interaction with DNAJC10/ERdj5, probably to facilitate the release of DNAJC10/ERdj5 from its substrate. Acts as a key repressor of the EIF2AK3/PERK and ERN1/IRE1-mediated unfolded protein response (UPR). In the unstressed endoplasmic reticulum, recruited by DNAJB9/ERdj4 to the luminal region of ERN1/IRE1, leading to disrupt the dimerization of ERN1/IRE1, thereby inactivating ERN1/IRE1. Also binds and inactivates EIF2AK3/PERK in unstressed cells. Accumulation of misfolded protein in the endoplasmic reticulum causes release of HSPA5/BiP from ERN1/IRE1 and EIF2AK3/PERK, allowing their homodimerization and subsequent activation. Plays an auxiliary role in post-translational transport of small presecretory proteins across endoplasmic reticulum (ER). May function as an allosteric modulator for SEC61 channel-forming translocon complex, likely cooperating with SEC62 to enable the productive insertion of these precursors into SEC61 channel. Appears to specifically regulate translocation of precursors having inhibitory residues in their mature region that weaken channel gating. May also play a role in apoptosis and cell proliferation. The protein is Endoplasmic reticulum chaperone BiP of Mus musculus (Mouse).